The following is a 970-amino-acid chain: uncharacterized protein (970 aa).

A helical membrane pass occupies residues 12-32 (VIFFSVFFVIFFLFIESSVGF).

This sequence to E.coli YtfN.

The protein resides in the membrane. This is an uncharacterized protein from Buchnera aphidicola subsp. Acyrthosiphon pisum (strain APS) (Acyrthosiphon pisum symbiotic bacterium).